The following is a 295-amino-acid chain: sn-glycerol-3-phosphate transport system permease protein UgpA (295 aa).

Residues 1–11 (MSPSRPGFSCS) lie on the Cytoplasmic side of the membrane. A helical transmembrane segment spans residues 12 to 32 (WLPYLLVLPQLAITAIFFLWP). The Periplasmic segment spans residues 33–80 (AGEALWYSVQTLDPFGLSSEFVGLSNFIQLFQDEYYLASFYTTLIFSA). Residues 72–284 (FYTTLIFSAL…LLVIGLTVIQ (213 aa)) enclose the ABC transmembrane type-1 domain. The chain crosses the membrane as a helical span at residues 81 to 101 (LVAGIGLIVSLFLAAMVNYVL). The Cytoplasmic portion of the chain corresponds to 102-109 (RGSRLYQT). Residues 110-130 (LLILPYAVAPAVAAVLWIFLF) traverse the membrane as a helical segment. Residues 131 to 157 (DPGLGLITHALAKLGYSWNHAQNSGQA) are Periplasmic-facing. The helical transmembrane segment at 158–178 (MFLVVLASVWKQISYNFLFFL) threads the bilayer. Residues 179–207 (AALQSIPKSLVEAAAIDGAGPVRRFFNLV) lie on the Cytoplasmic side of the membrane. The chain crosses the membrane as a helical span at residues 208-228 (LPLISPVSFFLLVVNLVYAFF). The Periplasmic portion of the chain corresponds to 229 to 262 (DTFPVIDAATGGGPVQATTTLIYKIYREGFAGLD). A helical membrane pass occupies residues 263-283 (LSSSAAQSVILMLLVIGLTVI). Over 284–295 (QFRFVERKVRYQ) the chain is Cytoplasmic.

The protein belongs to the binding-protein-dependent transport system permease family. UgpAE subfamily. As to quaternary structure, the complex is composed of two ATP-binding proteins (UgpC), two transmembrane proteins (UgpA and UgpE) and a solute-binding protein (UgpB).

It localises to the cell inner membrane. Functionally, part of the ABC transporter complex UgpBAEC involved in sn-glycerol-3-phosphate (G3P) import. Probably responsible for the translocation of the substrate across the membrane. The chain is sn-glycerol-3-phosphate transport system permease protein UgpA (ugpA) from Yersinia pestis bv. Antiqua (strain Antiqua).